We begin with the raw amino-acid sequence, 94 residues long: Large ribosomal subunit protein bL25 (94 aa).

It belongs to the bacterial ribosomal protein bL25 family. Part of the 50S ribosomal subunit; part of the 5S rRNA/L5/L18/L25 subcomplex. Contacts the 5S rRNA. Binds to the 5S rRNA independently of L5 and L18.

In terms of biological role, this is one of the proteins that binds to the 5S RNA in the ribosome where it forms part of the central protuberance. This Serratia proteamaculans (strain 568) protein is Large ribosomal subunit protein bL25.